The following is a 101-amino-acid chain: MAKLALIEREKKRARLVAKFAAKREALKAIVEDQSKSEEERYEARLELQQLPRNSNPTRQRNRCAITGRPRGTFRKFGLARNKIREIAFRGEIPGLTKASW.

The protein belongs to the universal ribosomal protein uS14 family. In terms of assembly, part of the 30S ribosomal subunit. Contacts proteins S3 and S10.

In terms of biological role, binds 16S rRNA, required for the assembly of 30S particles and may also be responsible for determining the conformation of the 16S rRNA at the A site. This is Small ribosomal subunit protein uS14 from Burkholderia vietnamiensis (strain G4 / LMG 22486) (Burkholderia cepacia (strain R1808)).